The sequence spans 491 residues: UDP-GalNAc:beta-1,3-N-acetylgalactosaminyltransferase 2 (491 aa).

Over 1–2 (MR) the chain is Cytoplasmic. A helical; Signal-anchor for type II membrane protein membrane pass occupies residues 3-23 (SAAAALSVCVLAVLLHWICWT). Residues 24–491 (DRSAELLGFR…NKCGDPCGCS (468 aa)) are Lumenal-facing. N-linked (GlcNAc...) asparagine glycosylation is found at Asn167 and Asn230.

This sequence belongs to the glycosyltransferase 31 family.

The protein localises to the golgi apparatus membrane. Its subcellular location is the endoplasmic reticulum. It carries out the reaction 3-O-(N-acetyl-beta-D-glucosaminyl-(1-&gt;4)-alpha-D-mannosyl)-L-threonyl-[protein] + UDP-N-acetyl-alpha-D-galactosamine = 3-O-[beta-D-GalNAc-(1-&gt;3)-beta-D-GlcNAc-(1-&gt;4)-alpha-D-Man]-L-Thr-[protein] + UDP + H(+). It participates in protein modification; protein glycosylation. Its function is as follows. Beta-1,3-N-acetylgalactosaminyltransferase that synthesizes a unique carbohydrate structure, GalNAc-beta-1-3GlcNAc, on N- and O-glycans. Has no galactose nor galactosaminyl transferase activity toward any acceptor substrate. Involved in alpha-dystroglycan (dag1) glycosylation. In Danio rerio (Zebrafish), this protein is UDP-GalNAc:beta-1,3-N-acetylgalactosaminyltransferase 2 (b3galnt2).